A 114-amino-acid chain; its full sequence is Large ribosomal subunit protein bL20c (114 aa).

It belongs to the bacterial ribosomal protein bL20 family.

The protein resides in the plastid. Its subcellular location is the chloroplast. Binds directly to 23S ribosomal RNA and is necessary for the in vitro assembly process of the 50S ribosomal subunit. It is not involved in the protein synthesizing functions of that subunit. The protein is Large ribosomal subunit protein bL20c (rpl20) of Trieres chinensis (Marine centric diatom).